We begin with the raw amino-acid sequence, 394 residues long: Mannosyl-3-phosphoglycerate synthase (394 aa).

It belongs to the glycosyltransferase 2 family. The cofactor is Mg(2+).

It localises to the cytoplasm. The enzyme catalyses (2R)-3-phosphoglycerate + GDP-alpha-D-mannose = 2-O-(alpha-D-mannosyl)-3-phosphoglycerate + GDP + H(+). It participates in carbohydrate biosynthesis; 2-(alpha-D-mannosyl)-D-glycerate biosynthesis; 2-(alpha-D-mannosyl)-D-glycerate from GDP-alpha-D-mannose (MPG route): step 1/2. Functionally, transfers a mannosyl group from GDP-mannose to phosphoglycerate to form mannosyl-3-phosphoglycerate (MPG). The enzyme is absolutely specific for GDP-mannose and 3-phosphoglycerate, and transfers the mannosyl group with retention of configuration. This Pyrococcus horikoshii (strain ATCC 700860 / DSM 12428 / JCM 9974 / NBRC 100139 / OT-3) protein is Mannosyl-3-phosphoglycerate synthase (mngA).